A 197-amino-acid chain; its full sequence is Nucleoside triphosphate pyrophosphatase (197 aa).

Aspartate 71 serves as the catalytic Proton acceptor.

This sequence belongs to the Maf family. It depends on a divalent metal cation as a cofactor.

The protein localises to the cytoplasm. The catalysed reaction is a ribonucleoside 5'-triphosphate + H2O = a ribonucleoside 5'-phosphate + diphosphate + H(+). It carries out the reaction a 2'-deoxyribonucleoside 5'-triphosphate + H2O = a 2'-deoxyribonucleoside 5'-phosphate + diphosphate + H(+). Nucleoside triphosphate pyrophosphatase. May have a dual role in cell division arrest and in preventing the incorporation of modified nucleotides into cellular nucleic acids. The polypeptide is Nucleoside triphosphate pyrophosphatase (Synechococcus sp. (strain JA-3-3Ab) (Cyanobacteria bacterium Yellowstone A-Prime)).